A 566-amino-acid polypeptide reads, in one-letter code: Arginine--tRNA ligase (566 aa).

A 'HIGH' region motif is present at residues 121–131 (ANPNGPFHIGH).

This sequence belongs to the class-I aminoacyl-tRNA synthetase family.

It localises to the cytoplasm. It carries out the reaction tRNA(Arg) + L-arginine + ATP = L-arginyl-tRNA(Arg) + AMP + diphosphate. The sequence is that of Arginine--tRNA ligase from Methanococcus maripaludis (strain C6 / ATCC BAA-1332).